Here is a 739-residue protein sequence, read N- to C-terminus: MDSRPQKVWMTPSLTESDMDYHKILTAGLSVQQGIVRQRVIPVYQVNNLEEICQLIIQAFEAGVDFQESADSFLLMLCLHHAYQGDYKLFLESGAVKYLEGHGFRFEVKKRDGVKRLEELLPAVSSGKNIKRTLAAMPEEETTEANAGQFLSFASLFLPKLVVGEKACLRKVQRQIQVHAEQGLIQYPTAWQSVGHMMVIFRLMRTNFLIKFLLIHQGMHMVAGHDANDAVISNSVAQARFSGLLIVKTVLDHILQKTQRGVRLHPLARTAKVKNEVNSLKAALSSLAKHGEYAPFARLLNLSGVNNLEHGLFPQLSAIALGVATAHGSTLAGVNVGEQYQQLREAATEAEKQLQQYAESRELDHLGLDDQEKKILMNFHQKKNEISFQQTNAMVTLKKERLAKLTEAITAASLPKTSGHYDDDDDIPFPGPINDDDNPGHQDDDPTDSQDTTIPDVVVDPDDGSYGEYQSYSENGMNAPDDLVLFDLDEDDEDTKPVPNRSTKGGQQKNSQKGQHTEGRQTQSRPTQNIPGPHRTIHHASAPLTDNDRRNEPSGSTSPRMLTPINEEADPLDDADDETSSLPPLESDDEEQDRDGTSNRTPTVAPPAPVYRDHSEKKELPQDERQDQDHTQEARNQDSDNTQPEHSFEEMYRHILRSQGPFDAVLYYHMMKDEPVVFSTSDGKEYTYPDSLEEEYPPWLTEKEAMNEENTFVTLDGQQFYWPVMNHKDKFMAILQHHQ.

Residues 334–363 adopt a coiled-coil conformation; that stretch reads VNVGEQYQQLREAATEAEKQLQQYAESREL. Residues 415–646 are disordered; the sequence is PKTSGHYDDD…QDSDNTQPEH (232 aa). Composition is skewed to low complexity over residues 449–458 and 504–514; these read SQDTTIPDVV and KGGQQKNSQKG. The span at 520–530 shows a compositional bias: polar residues; the sequence is RQTQSRPTQNI. Acidic residues predominate over residues 567–579; the sequence is EEADPLDDADDET. The span at 611 to 638 shows a compositional bias: basic and acidic residues; it reads YRDHSEKKELPQDERQDQDHTQEARNQD.

The protein belongs to the filoviruses nucleoprotein family. Homooligomer. Homomultimerizes to form the nucleocapsid. Binds to viral genomic RNA. Interacts with VP35 and VP30 to form the nucleocapsid. Interacts with host PPP2R5C; this interaction leads to VP30 dephosphorylation and viral transcription. Interacts with VP24; this interaction facilitates nucleocapsid assembly and genome packaging. Interacts with matrix protein VP40; this interaction allows recruitment of the nucleocapsid into progeny virions. Interacts with host STAU1. Interacts with host NXF1 (via RNA-binding domain); this interaction recruits NXF1 to the inclusion bodies were viral replication takes place, probably to export viral mRNA-NXF1 complexes from these sites. Interacts with host CCDC92; this interaction sequesters NP in the host cytoplasm. Interacts with host TRIM14. In terms of processing, phosphorylated and O-glycosylated by host. Acetylated by host EP300 in vitro.

The protein localises to the virion. The protein resides in the host cytoplasm. In terms of biological role, oligomerizes into helical capsid to encapsidate the viral genome, protecting it from nucleases and the cellular innate immune response. VP35 binds to and stabilizes monomeric NP, keeping it soluble. Upon virus replication, NP is recruited to bind cooperatively viral genomic RNA and VP35 is released. The encapsidated genomic RNA is termed the nucleocapsid and serves as template for transcription and replication. The nucleocapsid is helical with a pitch of 10.81 NP per turn and a diameter of about 22nm. Each NP binds to six nucleotides of viral genomic RNA, three being exposed to the solvant and three hidden into the nucleocapsid. Also recruits host PPP2R5C phosphatase to dephosphorylate VP30 and thereby promote viral transcription. Upon virion assembly and budding, NP binds to VP24 and possibly host STAU1. This chain is Nucleoprotein (NP), found in Zaire ebolavirus (strain Gabon-94) (ZEBOV).